The sequence spans 134 residues: Large ribosomal subunit protein bL20 (134 aa).

It belongs to the bacterial ribosomal protein bL20 family.

Functionally, binds directly to 23S ribosomal RNA and is necessary for the in vitro assembly process of the 50S ribosomal subunit. It is not involved in the protein synthesizing functions of that subunit. The sequence is that of Large ribosomal subunit protein bL20 from Rhizobium meliloti (strain 1021) (Ensifer meliloti).